The sequence spans 150 residues: Ribosome maturation factor RimP (150 aa).

It belongs to the RimP family.

Its subcellular location is the cytoplasm. Required for maturation of 30S ribosomal subunits. This is Ribosome maturation factor RimP from Thermotoga sp. (strain RQ2).